The following is a 467-amino-acid chain: MLKVFNTATLKKEEFKPIVPGKITMYVCGPTVYNYIHVGNARSSIAFDTIRRYLLYRGYDVNFVSNFTDVDDKIINRAQEEGVSENAIASKYIKAFYEDTKPLNIIPATTRTRATEVIPDIIEFVSDLIDKGYAYESQGGVYFRVRKAGNYGLLAHENLEDLEVGASGRLDDGALALKEDPLDFALWKNEPRQVIKWDSPWGQGRPGWHIECSVMSTKYLGYTIDIHGGGIDLAFPHHTDEMAQSEAHTGKQFVHYWLHNGFVNVNNEKMSKSLGNFTTVHELLSSYDDPMAIRFLMTATHYRRPINYSSSELERARVELDRIRTAYRRLKNADFKIGDDPQIDQLVSKQTAAFVEAMDDDFNVANALAAIFELVRLANSYVDSGDVKDKSAQEILRQIAELIGVFGISGLETKKESLPKKIELLLKKRETARINKNWQQSDQLRDEIFSLGYKVSDSSNGQQVRKI.

C28 provides a ligand contact to Zn(2+). Residues 30 to 40 (PTVYNYIHVGN) carry the 'HIGH' region motif. Residues C212, H237, and E241 each contribute to the Zn(2+) site. The 'KMSKS' region motif lies at 269 to 273 (KMSKS). K272 serves as a coordination point for ATP.

The protein belongs to the class-I aminoacyl-tRNA synthetase family. Monomer. It depends on Zn(2+) as a cofactor.

The protein localises to the cytoplasm. The enzyme catalyses tRNA(Cys) + L-cysteine + ATP = L-cysteinyl-tRNA(Cys) + AMP + diphosphate. In Oenococcus oeni (strain ATCC BAA-331 / PSU-1), this protein is Cysteine--tRNA ligase.